A 161-amino-acid polypeptide reads, in one-letter code: Nucleotide-binding protein Sama_2557 (161 aa).

The protein belongs to the YajQ family.

Its function is as follows. Nucleotide-binding protein. This is Nucleotide-binding protein Sama_2557 from Shewanella amazonensis (strain ATCC BAA-1098 / SB2B).